Here is a 696-residue protein sequence, read N- to C-terminus: Divalent metal transporter 1 (696 aa).

Positions 1–31 (MHQDNSMRRAINQSRNGGSDSCDINNDREHD) are disordered. The Cytoplasmic portion of the chain corresponds to 1-236 (MHQDNSMRRA…RSNRLSFMSK (236 aa)). Residues 11 to 24 (INQSRNGGSDSCDI) show a composition bias toward polar residues. The chain crosses the membrane as a helical span at residues 237-255 (LKMYFNYFGPGWIVAIAYL). At 256–288 (DPGNICGNLNVGLIRSDDFINVNSSVKDYTGYR) the chain is on the vacuolar side. N-linked (GlcNAc...) asparagine glycosylation occurs at Asn278. Residues 289–311 (LLWVLVYGHILGFIFHTLSMKLG) form a helical membrane-spanning segment. Residues 312–331 (HITGLDLAALCRKEFSSKFS) are Cytoplasmic-facing. A helical transmembrane segment spans residues 332–357 (YFLYICVQIAIWGAHLQAIIGVFVAI). The Vacuolar segment spans residues 358–362 (NLILG). Residues 363–382 (IPVKIAILYTLIEAFAYSFL) traverse the membrane as a helical segment. Topologically, residues 383–393 (ENKSLDLLEKV) are cytoplasmic. The chain crosses the membrane as a helical span at residues 394–416 (LSLLIGILVCCFMFNVFMTPINF). Residues 417-435 (QEVASSILYPRIPKGKLLD) lie on the Vacuolar side of the membrane. The chain crosses the membrane as a helical span at residues 436–455 (TMGLLGSVISAHIFYLHSNL). The Cytoplasmic segment spans residues 456–475 (TSKKKPVIYNDRMVKRYNKL). A helical membrane pass occupies residues 476 to 499 (GTIESGGSLLVSCITNCIIVLTFA). Topologically, residues 500 to 529 (EVNISGDDRKADYNLFNAYDVMKKYFGKTS) are vacuolar. A glycan (N-linked (GlcNAc...) asparagine) is linked at Asn502. The helical transmembrane segment at 530–546 (MYIWSFGLLSSGNNASF) threads the bilayer. Over 547–566 (MCEYASKSVFEGFLNKNVNP) the chain is Cytoplasmic. The chain crosses the membrane as a helical span at residues 567–585 (FFRVIFSRIILFIMLYAYV). Residues 586 to 596 (SYDKYTIDQLS) are Vacuolar-facing. A helical transmembrane segment spans residues 597-615 (NFINVVQILLLPLAIIPLY). Residues 616–634 (RFSIHKNVLGKFAIKGAFK) lie on the Cytoplasmic side of the membrane. A helical membrane pass occupies residues 635–657 (YLVFVLVISIIVANFLLTLFDFL). Topologically, residues 658 to 662 (QYAPS) are vacuolar. A helical transmembrane segment spans residues 663 to 684 (NLYVIFIFISSIFYLLFIIYFF). The Cytoplasmic segment spans residues 685-696 (NMPITKTYYKDS).

Belongs to the NRAMP (TC 2.A.55) family.

It is found in the vacuole membrane. It catalyses the reaction Fe(2+)(in) = Fe(2+)(out). Iron transporter. Required for parasite development during the blood stages. Required for full pathogenicity. In Plasmodium yoelii, this protein is Divalent metal transporter 1.